The following is a 367-amino-acid chain: Cobalt-precorrin-5B C(1)-methyltransferase (367 aa).

It belongs to the CbiD family.

The catalysed reaction is Co-precorrin-5B + S-adenosyl-L-methionine = Co-precorrin-6A + S-adenosyl-L-homocysteine. Its pathway is cofactor biosynthesis; adenosylcobalamin biosynthesis; cob(II)yrinate a,c-diamide from sirohydrochlorin (anaerobic route): step 6/10. Catalyzes the methylation of C-1 in cobalt-precorrin-5B to form cobalt-precorrin-6A. This chain is Cobalt-precorrin-5B C(1)-methyltransferase, found in Priestia megaterium (Bacillus megaterium).